A 275-amino-acid chain; its full sequence is Formamidopyrimidine-DNA glycosylase (275 aa).

Proline 2 (schiff-base intermediate with DNA) is an active-site residue. Glutamate 3 (proton donor) is an active-site residue. The active-site Proton donor; for beta-elimination activity is the lysine 59. Histidine 93, arginine 112, and arginine 153 together coordinate DNA. Residues 238-272 form an FPG-type zinc finger; the sequence is NVYDRVGKPCPRCQTAIERIVVAQRSTFFCPLCQV. Residue arginine 262 is the Proton donor; for delta-elimination activity of the active site.

This sequence belongs to the FPG family. As to quaternary structure, monomer. The cofactor is Zn(2+).

It catalyses the reaction Hydrolysis of DNA containing ring-opened 7-methylguanine residues, releasing 2,6-diamino-4-hydroxy-5-(N-methyl)formamidopyrimidine.. It carries out the reaction 2'-deoxyribonucleotide-(2'-deoxyribose 5'-phosphate)-2'-deoxyribonucleotide-DNA = a 3'-end 2'-deoxyribonucleotide-(2,3-dehydro-2,3-deoxyribose 5'-phosphate)-DNA + a 5'-end 5'-phospho-2'-deoxyribonucleoside-DNA + H(+). Functionally, involved in base excision repair of DNA damaged by oxidation or by mutagenic agents. Acts as a DNA glycosylase that recognizes and removes damaged bases. Has a preference for oxidized purines, such as 7,8-dihydro-8-oxoguanine (8-oxoG). Has AP (apurinic/apyrimidinic) lyase activity and introduces nicks in the DNA strand. Cleaves the DNA backbone by beta-delta elimination to generate a single-strand break at the site of the removed base with both 3'- and 5'-phosphates. This Chloroflexus aggregans (strain MD-66 / DSM 9485) protein is Formamidopyrimidine-DNA glycosylase.